A 189-amino-acid polypeptide reads, in one-letter code: Ras-like protein 1 (189 aa).

10–17 (GAGGVGKS) lines the GTP pocket. An Effector region motif is present at residues 32-40 (YDPTIEDSY). GTP-binding positions include 57–61 (DTAGQ) and 116–119 (NKCD). Residue Cys186 is modified to Cysteine methyl ester. The S-geranylgeranyl cysteine moiety is linked to residue Cys186. A propeptide spans 187–189 (KIL) (removed in mature form).

Belongs to the small GTPase superfamily. Ras family.

The protein resides in the cell membrane. The enzyme catalyses GTP + H2O = GDP + phosphate + H(+). Its activity is regulated as follows. Alternates between an inactive form bound to GDP and an active form bound to GTP. Activated by a guanine nucleotide-exchange factor (GEF) and inactivated by a GTPase-activating protein (GAP). Ras proteins bind GDP/GTP and possess intrinsic GTPase activity. Plays a role in eye development by regulating cell growth, survival of postmitotic ommatidial cells and differentiation of photoreceptor cells. During larval development, mediates Ptth/tor signaling leading to the production of ecdysone, a hormone required for the initiation of metamorphosis. The polypeptide is Ras-like protein 1 (Drosophila persimilis (Fruit fly)).